The following is a 361-amino-acid chain: Phosphoserine aminotransferase (361 aa).

An L-glutamate-binding site is contributed by Arg43. Pyridoxal 5'-phosphate-binding positions include 77 to 78, Trp103, Thr153, Asp173, and Gln196; that span reads AS. At Lys197 the chain carries N6-(pyridoxal phosphate)lysine. Pyridoxal 5'-phosphate is bound at residue 238–239; sequence NT.

This sequence belongs to the class-V pyridoxal-phosphate-dependent aminotransferase family. SerC subfamily. In terms of assembly, homodimer. Pyridoxal 5'-phosphate serves as cofactor.

The protein localises to the cytoplasm. The enzyme catalyses O-phospho-L-serine + 2-oxoglutarate = 3-phosphooxypyruvate + L-glutamate. The catalysed reaction is 4-(phosphooxy)-L-threonine + 2-oxoglutarate = (R)-3-hydroxy-2-oxo-4-phosphooxybutanoate + L-glutamate. It participates in amino-acid biosynthesis; L-serine biosynthesis; L-serine from 3-phospho-D-glycerate: step 2/3. Its pathway is cofactor biosynthesis; pyridoxine 5'-phosphate biosynthesis; pyridoxine 5'-phosphate from D-erythrose 4-phosphate: step 3/5. In terms of biological role, catalyzes the reversible conversion of 3-phosphohydroxypyruvate to phosphoserine and of 3-hydroxy-2-oxo-4-phosphonooxybutanoate to phosphohydroxythreonine. The protein is Phosphoserine aminotransferase of Pseudomonas syringae pv. syringae (strain B728a).